The chain runs to 914 residues: Ubiquitin carboxyl-terminal hydrolase 33 (914 aa).

A UBP-type zinc finger spans residues 6 to 109; sequence NHCPHLDSVG…PSLPHVRQPH (104 aa). Zn(2+) contacts are provided by Cys8, His10, Cys30, Cys33, Cys43, Cys48, Cys53, His60, His64, His70, Cys83, and Cys86. The region spanning 154 to 683 is the USP domain; the sequence is TGLKNIGNTC…EAYVLFYRKS (530 aa). Cys163 acts as the Nucleophile in catalysis. Residues 266–313 are disordered; that stretch reads PQTITTEETMEEDKSQSDVDFQSCESCSNSDKAENENGSSCFSEDNNE. Residues 283 to 313 are compositionally biased toward polar residues; the sequence is DVDFQSCESCSNSDKAENENGSSCFSEDNNE. Phosphoserine is present on residues Ser345 and Ser407. Residues 387 to 410 are compositionally biased toward polar residues; the sequence is DLSTPQILPSNESINPRLSASPPK. Positions 387 to 437 are disordered; it reads DLSTPQILPSNESINPRLSASPPKSGNLWPGLAPPHKKAQSASPKRKKQHK. A compositionally biased stretch (basic residues) spans 421 to 437; it reads PHKKAQSASPKRKKQHK. The active-site Proton acceptor is the His641. 2 consecutive DUSP domains span residues 685–778 and 786–893; these read EEAQ…LYIC and EEIE…RPPV.

It belongs to the peptidase C19 family. USP20/USP33 subfamily. In terms of assembly, interacts with VHL, leading to its ubiquitination and subsequent degradation. Interacts with ARRB1 and ARRB2. Interacts with ADRB2. Interacts with DIO2. Interacts with ROBO1. Interacts with SELENBP1; in a selenium-dependent manner. Interacts with CCP110. Post-translationally, ubiquitinated via a VHL-dependent pathway for proteasomal degradation.

The protein localises to the cytoplasm. Its subcellular location is the perinuclear region. It localises to the cytoskeleton. It is found in the microtubule organizing center. The protein resides in the centrosome. It carries out the reaction Thiol-dependent hydrolysis of ester, thioester, amide, peptide and isopeptide bonds formed by the C-terminal Gly of ubiquitin (a 76-residue protein attached to proteins as an intracellular targeting signal).. Its function is as follows. Deubiquitinating enzyme involved in various processes such as centrosome duplication, cellular migration and beta-2 adrenergic receptor/ADRB2 recycling. Involved in regulation of centrosome duplication by mediating deubiquitination of CCP110 in S and G2/M phase, leading to stabilize CCP110 during the period which centrioles duplicate and elongate. Involved in cell migration via its interaction with intracellular domain of ROBO1, leading to regulate the Slit signaling. Plays a role in commissural axon guidance cross the ventral midline of the neural tube in a Slit-dependent manner, possibly by mediating the deubiquitination of ROBO1. Acts as a regulator of G-protein coupled receptor (GPCR) signaling by mediating the deubiquitination of beta-arrestins (ARRB1 and ARRB2) and beta-2 adrenergic receptor (ADRB2). Plays a central role in ADRB2 recycling and resensitization after prolonged agonist stimulation by constitutively binding ADRB2, mediating deubiquitination of ADRB2 and inhibiting lysosomal trafficking of ADRB2. Upon dissociation, it is probably transferred to the translocated beta-arrestins, leading to beta-arrestins deubiquitination and disengagement from ADRB2. This suggests the existence of a dynamic exchange between the ADRB2 and beta-arrestins. Deubiquitinates DIO2, thereby regulating thyroid hormone regulation. Mediates deubiquitination of both 'Lys-48'- and 'Lys-63'-linked polyubiquitin chains. The sequence is that of Ubiquitin carboxyl-terminal hydrolase 33 (USP33) from Pongo abelii (Sumatran orangutan).